We begin with the raw amino-acid sequence, 154 residues long: Urease accessory protein UreE (154 aa).

Positions 134–154 (PESGAYGKSGHNHGHSHSHED) are disordered. Positions 143 to 154 (GHNHGHSHSHED) are enriched in basic residues.

The protein belongs to the UreE family.

The protein resides in the cytoplasm. Its function is as follows. Involved in urease metallocenter assembly. Binds nickel. Probably functions as a nickel donor during metallocenter assembly. The sequence is that of Urease accessory protein UreE from Alteromonas mediterranea (strain DSM 17117 / CIP 110805 / LMG 28347 / Deep ecotype).